A 213-amino-acid polypeptide reads, in one-letter code: MAVLRVLCGLLLVSILFLGFVLSEGNGPKVTEKVFFDIEVDEQPLGRIIIGLFGKTVPKTVENFKQLSIGTTLKDGRTAAYKGSTFHRVIKSFMIQGGDFTNHDGTGGFSIYGERFPDENFKLKHVGAGWLSMANAGPNTNGAQFFITTTQNPWLDGKHVVFGKVVEGMSVVRQIENMQTDSRDRPVKSVKIANCGHIPVDVPFSVSNTDAAE.

An N-terminal signal peptide occupies residues 1–23 (MAVLRVLCGLLLVSILFLGFVLS). The region spanning 35-197 (FFDIEVDEQP…KSVKIANCGH (163 aa)) is the PPIase cyclophilin-type domain. Positions 210–213 (DAAE) match the Prevents secretion from ER motif.

It belongs to the cyclophilin-type PPIase family. PPIase B subfamily.

The protein localises to the endoplasmic reticulum lumen. It catalyses the reaction [protein]-peptidylproline (omega=180) = [protein]-peptidylproline (omega=0). With respect to regulation, inhibited by cyclosporin A (CsA). PPIases accelerate the folding of proteins. It catalyzes the cis-trans isomerization of proline imidic peptide bonds in oligopeptides. In Schistosoma japonicum (Blood fluke), this protein is Peptidyl-prolyl cis-trans isomerase B.